The sequence spans 110 residues: Large ribosomal subunit protein uL22 (110 aa).

It belongs to the universal ribosomal protein uL22 family. In terms of assembly, part of the 50S ribosomal subunit.

Its function is as follows. This protein binds specifically to 23S rRNA; its binding is stimulated by other ribosomal proteins, e.g. L4, L17, and L20. It is important during the early stages of 50S assembly. It makes multiple contacts with different domains of the 23S rRNA in the assembled 50S subunit and ribosome. The globular domain of the protein is located near the polypeptide exit tunnel on the outside of the subunit, while an extended beta-hairpin is found that lines the wall of the exit tunnel in the center of the 70S ribosome. This Pseudomonas aeruginosa (strain LESB58) protein is Large ribosomal subunit protein uL22.